Reading from the N-terminus, the 536-residue chain is Bifunctional purine biosynthesis protein PurH (536 aa).

The 151-residue stretch at 8–158 (IPAPDEVRIK…KNHAYVTIVT (151 aa)) folds into the MGS-like domain.

The protein belongs to the PurH family.

It catalyses the reaction (6R)-10-formyltetrahydrofolate + 5-amino-1-(5-phospho-beta-D-ribosyl)imidazole-4-carboxamide = 5-formamido-1-(5-phospho-D-ribosyl)imidazole-4-carboxamide + (6S)-5,6,7,8-tetrahydrofolate. The enzyme catalyses IMP + H2O = 5-formamido-1-(5-phospho-D-ribosyl)imidazole-4-carboxamide. The protein operates within purine metabolism; IMP biosynthesis via de novo pathway; 5-formamido-1-(5-phospho-D-ribosyl)imidazole-4-carboxamide from 5-amino-1-(5-phospho-D-ribosyl)imidazole-4-carboxamide (10-formyl THF route): step 1/1. It participates in purine metabolism; IMP biosynthesis via de novo pathway; IMP from 5-formamido-1-(5-phospho-D-ribosyl)imidazole-4-carboxamide: step 1/1. This is Bifunctional purine biosynthesis protein PurH from Rhizobium meliloti (strain 1021) (Ensifer meliloti).